A 298-amino-acid chain; its full sequence is UDP-N-acetylenolpyruvoylglucosamine reductase (298 aa).

The region spanning 27–191 (TGGEADVFVM…LDATFSLALE (165 aa)) is the FAD-binding PCMH-type domain. The active site involves arginine 170. Residue serine 220 is the Proton donor of the active site. The active site involves glutamate 290.

It belongs to the MurB family. It depends on FAD as a cofactor.

It localises to the cytoplasm. The enzyme catalyses UDP-N-acetyl-alpha-D-muramate + NADP(+) = UDP-N-acetyl-3-O-(1-carboxyvinyl)-alpha-D-glucosamine + NADPH + H(+). It participates in cell wall biogenesis; peptidoglycan biosynthesis. In terms of biological role, cell wall formation. In Listeria monocytogenes serotype 4a (strain HCC23), this protein is UDP-N-acetylenolpyruvoylglucosamine reductase.